The sequence spans 285 residues: MSRYTLAIVGCGVMGQALLSAIYNAPKASDEALQYYPSKIIACNDVPASAELVEKLVSGFETSPNGIEVEIATNDNERAVAEAKVIILGLKPHIVEPVLQQIPNEDGSKLLISLAAGVTLNQLSQYYKKVSRVMTNTPAKYGYGTAIVSHSTSVEPQDKAIVSELVSQVGKCLELPEKNMDAATALVGSGPAFVLLMLESMMEAGLKMGIPLKESRECAMKVLEGTAKMVEISGQSPGVLKHQVCTPGGTTIAGLCVMEDKGVKSGIIRGIEEAARVSKELGQKK.

Belongs to the pyrroline-5-carboxylate reductase family. Homotetramer.

It carries out the reaction L-proline + NADP(+) = (S)-1-pyrroline-5-carboxylate + NADPH + 2 H(+). It catalyses the reaction L-proline + NAD(+) = (S)-1-pyrroline-5-carboxylate + NADH + 2 H(+). The protein operates within amino-acid biosynthesis; L-proline biosynthesis; L-proline from L-glutamate 5-semialdehyde: step 1/1. In Kluyveromyces lactis (strain ATCC 8585 / CBS 2359 / DSM 70799 / NBRC 1267 / NRRL Y-1140 / WM37) (Yeast), this protein is Pyrroline-5-carboxylate reductase.